Here is a 193-residue protein sequence, read N- to C-terminus: Ion-translocating oxidoreductase complex subunit A (193 aa).

A run of 6 helical transmembrane segments spans residues 5-25 (ALLFVSILLVNNFVLVKFLGL), 39-59 (IGMGMATTFVMTLGSMFSWLI), 62-82 (FILVPLDILYLRTMAFILVLA), 102-122 (LLGIFLPLITTNCAVLGVVLL), 134-154 (TIYGFGGAAGFSLVMVLFAAI), and 171-191 (SIALITAGLMSLAFMGFTGLV).

Belongs to the NqrDE/RnfAE family. The complex is composed of six subunits: RnfA, RnfB, RnfC, RnfD, RnfE and RnfG.

It is found in the cell inner membrane. Functionally, part of a membrane-bound complex that couples electron transfer with translocation of ions across the membrane. The protein is Ion-translocating oxidoreductase complex subunit A of Pectobacterium atrosepticum (strain SCRI 1043 / ATCC BAA-672) (Erwinia carotovora subsp. atroseptica).